Reading from the N-terminus, the 217-residue chain is Uracil-DNA glycosylase (217 aa).

The active-site Proton acceptor is the D62.

This sequence belongs to the uracil-DNA glycosylase (UDG) superfamily. UNG family.

Its subcellular location is the cytoplasm. The catalysed reaction is Hydrolyzes single-stranded DNA or mismatched double-stranded DNA and polynucleotides, releasing free uracil.. Its function is as follows. Excises uracil residues from the DNA which can arise as a result of misincorporation of dUMP residues by DNA polymerase or due to deamination of cytosine. In Streptococcus uberis (strain ATCC BAA-854 / 0140J), this protein is Uracil-DNA glycosylase.